The sequence spans 302 residues: Putative thiol protease R355 (302 aa).

Active-site residues include His-182 and Asp-199. Cys-244 serves as the catalytic Nucleophile.

Belongs to the peptidase C48 family.

It is found in the virion. The chain is Putative thiol protease R355 from Acanthamoeba polyphaga mimivirus (APMV).